The following is a 200-amino-acid chain: Large ribosomal subunit protein uL4 (200 aa).

The disordered stretch occupies residues 42–69 (SKAQKNRSDVSGGGRKPWRQKGTGRARA).

This sequence belongs to the universal ribosomal protein uL4 family. As to quaternary structure, part of the 50S ribosomal subunit.

Its function is as follows. One of the primary rRNA binding proteins, this protein initially binds near the 5'-end of the 23S rRNA. It is important during the early stages of 50S assembly. It makes multiple contacts with different domains of the 23S rRNA in the assembled 50S subunit and ribosome. In terms of biological role, forms part of the polypeptide exit tunnel. This is Large ribosomal subunit protein uL4 from Alcanivorax borkumensis (strain ATCC 700651 / DSM 11573 / NCIMB 13689 / SK2).